Consider the following 109-residue polypeptide: Transmembrane protein 233 (109 aa).

A disordered region spans residues 1 to 30 (MSQYAPSPDFKRALDSSPEANTEDDKTEED). Residues 1–41 (MSQYAPSPDFKRALDSSPEANTEDDKTEEDVPMPKNYLWLT) are Cytoplasmic-facing. Acidic residues predominate over residues 21–30 (NTEDDKTEED). The helical intramembrane region spans 42-62 (IVSCFCPAYPINIVALVFSIM). Residues 63–84 (SLNSYNDGDYEGARRLGRNAKW) are Cytoplasmic-facing. Residues 85–105 (VAIASIIIGLLIIGISCAVHF) form a helical membrane-spanning segment. At 106–109 (TRNA) the chain is on the extracellular side.

It belongs to the CD225/Dispanin family. In terms of assembly, interacts with the giant stinging tree toxin ExTxA (AC P0DQP3). Interacts with Nav1.7/SCN9A. Interacts with Nav1.1/SCN1A, Nav1.2/SCN2A, Nav1.3/SCN3A, Nav1.4/SCN4A, Nav1.5/SCN5A, and Nav1.6/SCN8A.

The protein localises to the cell membrane. Functionally, probable accessory protein of voltage-gated sodium channels. This chain is Transmembrane protein 233, found in Homo sapiens (Human).